Here is a 391-residue protein sequence, read N- to C-terminus: S-adenosylmethionine synthase (391 aa).

Histidine 16 lines the ATP pocket. Aspartate 18 is a binding site for Mg(2+). Position 44 (glutamate 44) interacts with K(+). L-methionine-binding residues include glutamate 57 and glutamine 101. Residues 101–111 are flexible loop; that stretch reads QSADIAQGVDA. ATP contacts are provided by residues 166 to 168, aspartate 244, 250 to 251, alanine 267, and lysine 271; these read DAK and RK. Aspartate 244 lines the L-methionine pocket. Lysine 275 contacts L-methionine.

It belongs to the AdoMet synthase family. As to quaternary structure, homotetramer; dimer of dimers. Requires Mg(2+) as cofactor. The cofactor is K(+).

It is found in the cytoplasm. It catalyses the reaction L-methionine + ATP + H2O = S-adenosyl-L-methionine + phosphate + diphosphate. It functions in the pathway amino-acid biosynthesis; S-adenosyl-L-methionine biosynthesis; S-adenosyl-L-methionine from L-methionine: step 1/1. In terms of biological role, catalyzes the formation of S-adenosylmethionine (AdoMet) from methionine and ATP. The overall synthetic reaction is composed of two sequential steps, AdoMet formation and the subsequent tripolyphosphate hydrolysis which occurs prior to release of AdoMet from the enzyme. This chain is S-adenosylmethionine synthase, found in Zymomonas mobilis subsp. mobilis (strain ATCC 31821 / ZM4 / CP4).